A 553-amino-acid chain; its full sequence is Glucagon-like peptide 2 receptor (553 aa).

Residues 1–173 are Extracellular-facing; it reads MKLGSSRAGP…SFKQNVDRYA (173 aa). 3 cysteine pairs are disulfide-bonded: Cys83/Cys105, Cys96/Cys137, and Cys118/Cys159. 4 N-linked (GlcNAc...) asparagine glycosylation sites follow: Asn97, Asn113, Asn148, and Asn162. Residues 174-198 form a helical membrane-spanning segment; that stretch reads LLSTLQLMYTVGYSFSLISLFLALT. Topologically, residues 199–210 are cytoplasmic; that stretch reads LLLFLRKLHCTR. Residues 211-235 traverse the membrane as a helical segment; that stretch reads NYIHMNLFASFILRTLAVLVKDVVF. The Extracellular segment spans residues 236–261; sequence YNSYSKRPDNENGWMSYLSEMSTSCR. A helical transmembrane segment spans residues 262–285; that stretch reads SVQVLLHYFVGANYLWLLVEGLYL. Residues 286–299 are Cytoplasmic-facing; the sequence is HTLLEPTVLPERRL. A helical transmembrane segment spans residues 300–321; sequence WPRYLLLGWAFPVLFVVPWGFA. Residues 322–339 are Extracellular-facing; it reads RAHLENTGCWTTNGNKKI. The chain crosses the membrane as a helical span at residues 340–362; sequence WWIIRGPMMLCVTVNFFIFLKIL. Over 363–386 the chain is Cytoplasmic; that stretch reads KLLISKLKAHQMCFRDYKYRLAKS. The chain crosses the membrane as a helical span at residues 387–405; that stretch reads TLVLIPLLGVHEILFSFIT. The Extracellular segment spans residues 406–417; the sequence is DDQVEGFAKLIR. The chain crosses the membrane as a helical span at residues 418–438; the sequence is LFIQLTLSSFHGFLVALQYGF. Residues 439-550 are Cytoplasmic-facing; sequence ANGEVKAELR…ANTMEEILEE (112 aa).

It belongs to the G-protein coupled receptor 2 family.

The protein resides in the cell membrane. Its function is as follows. This is a receptor for glucagon-like peptide 2. The activity of this receptor is mediated by G proteins which activate adenylyl cyclase. The protein is Glucagon-like peptide 2 receptor (GLP2R) of Homo sapiens (Human).